The primary structure comprises 578 residues: Putative ankyrin repeat protein FPV022 (578 aa).

ANK repeat units follow at residues arginine 4–lysine 34, lysine 38–alanine 67, cysteine 68–valine 97, lysine 100–tyrosine 129, tyrosine 160–asparagine 189, glutamate 222–valine 251, histidine 255–methionine 287, tyrosine 320–lysine 349, tyrosine 353–alanine 382, aspartate 386–serine 415, and asparagine 419–lysine 449.

The protein is Putative ankyrin repeat protein FPV022 of Fowlpox virus (strain NVSL) (FPV).